The following is a 240-amino-acid chain: Mediator of RNA polymerase II transcription subunit 19-B (240 aa).

Residues 1 to 14 (MTEIFSSLYGQPDS) show a composition bias toward polar residues. Disordered stretches follow at residues 1-29 (MTEIFSSLYGQPDSQGPAGPSALGFGSGK) and 168-240 (PKKK…SSLR). 2 stretches are compositionally biased toward basic residues: residues 168–180 (PKKKNKHKHKHHR) and 209–221 (KKKKKDKKKKKNR).

It belongs to the Mediator complex subunit 19 family. As to quaternary structure, component of the Mediator complex.

It is found in the nucleus. Its function is as follows. Component of the Mediator complex, a coactivator involved in the regulated transcription of nearly all RNA polymerase II-dependent genes. Mediator functions as a bridge to convey information from gene-specific regulatory proteins to the basal RNA polymerase II transcription machinery. Mediator is recruited to promoters by direct interactions with regulatory proteins and serves as a scaffold for the assembly of a functional preinitiation complex with RNA polymerase II and the general transcription factors. This Danio rerio (Zebrafish) protein is Mediator of RNA polymerase II transcription subunit 19-B (med19b).